A 474-amino-acid chain; its full sequence is P2X purinoceptor 2 (474 aa).

Over M1–R42 the chain is Cytoplasmic. Residues A43–Q60 traverse the membrane as a helical segment. The Extracellular portion of the chain corresponds to K61–S333. ATP is bound by residues K77 and K79. 3 disulfide bridges follow: C121/C172, C132/C155, and C138/C166. Residue N129 is glycosylated (N-linked (GlcNAc...) asparagine). N190 carries an N-linked (GlcNAc...) asparagine glycan. Position 192 (T192) interacts with ATP. Residues C222 and C232 are joined by a disulfide bond. N247 is a glycosylation site (N-linked (GlcNAc...) asparagine). The cysteines at positions 266 and 275 are disulfide-linked. Positions 292, 296, and 298 each coordinate ATP. Residue N306 is glycosylated (N-linked (GlcNAc...) asparagine). K315 contacts ATP. The segment at A316 to A329 is pore-forming motif. Residues L334–L354 traverse the membrane as a helical segment. At C355 to L474 the chain is on the cytoplasmic side. The disordered stretch occupies residues P445–L474. Residues L453–T466 are compositionally biased toward polar residues.

This sequence belongs to the P2X receptor family. Homotrimer and heterotrimer; functional P2XRs are organized as homomeric and heteromeric trimers. Homotrimer. Forms heterodimer with P2RX1. Forms heterotrimer with P2RX6. Forms heterotrimer with P2RX3. As to expression, express in organ of Corti.

It localises to the cell membrane. The enzyme catalyses Ca(2+)(in) = Ca(2+)(out). The catalysed reaction is K(+)(in) = K(+)(out). It catalyses the reaction Na(+)(in) = Na(+)(out). Fast activation by external ATP. Exhibits slow desensitization during prolonged ATP activation. Not sensitive to the ATP agonist:alpha/beta-methylene-ATP. In terms of biological role, ATP-gated nonselective transmembrane cation channel permeable to potassium, sodium and calcium. Activation by extracellular ATP induces a variety of cellular responses, such as excitatory postsynaptic responses in sensory neurons, neuromuscular junctions (NMJ) formation, hearing, perception of taste and peristalsis. In the inner ear, regulates sound transduction and auditory neurotransmission, outer hair cell electromotility, inner ear gap junctions, and K(+) recycling. Mediates synaptic transmission between neurons and from neurons to smooth muscle. The sequence is that of P2X purinoceptor 2 (P2RX2) from Cavia porcellus (Guinea pig).